Consider the following 291-residue polypeptide: Kidney mitochondrial carrier protein 1 (291 aa).

Ser2 carries the post-translational modification N-acetylserine. Solcar repeat units lie at residues 7–96 (KPFV…LKRL), 104–189 (ETLL…TKKH), and 198–289 (DTVA…LKKL). The next 6 helical transmembrane spans lie at 9-26 (FVYG…TFPI), 71-89 (GIAP…KIGT), 106-124 (LLVN…SAIA), 164-183 (GVSL…LPVY), 204-224 (FLSS…VDVV), and 264-283 (GFWP…FLTY).

It belongs to the mitochondrial carrier (TC 2.A.29) family. In terms of assembly, interacts with VDAC1. In terms of tissue distribution, present in kidney (at protein level). Expressed predominantly within the kidney cortex in the proximal and distal tubules and at lower levels in the testis and white adipose tissue.

It is found in the mitochondrion inner membrane. It catalyses the reaction sulfite(in) + sulfate(out) = sulfite(out) + sulfate(in). The catalysed reaction is thiosulfate(in) + sulfate(out) = thiosulfate(out) + sulfate(in). The enzyme catalyses sulfate(out) + phosphate(in) = sulfate(in) + phosphate(out). It carries out the reaction oxalate(in) + sulfate(out) = oxalate(out) + sulfate(in). It catalyses the reaction malonate(in) + sulfate(out) = malonate(out) + sulfate(in). The catalysed reaction is maleate(in) + sulfate(out) = maleate(out) + sulfate(in). The enzyme catalyses (S)-malate(in) + sulfate(out) = (S)-malate(out) + sulfate(in). It carries out the reaction (3S)-citramalate(in) + sulfate(out) = (3S)-citramalate(out) + sulfate(in). It catalyses the reaction (3R)-citramalate(in) + sulfate(out) = (3R)-citramalate(out) + sulfate(in). The catalysed reaction is sulfate(out) + succinate(in) = sulfate(in) + succinate(out). The enzyme catalyses (S,S)-tartrate(in) + sulfate(out) = (S,S)-tartrate(out) + sulfate(in). It carries out the reaction (2R,3R)-tartrate(in) + sulfate(out) = (2R,3R)-tartrate(out) + sulfate(in). It catalyses the reaction D-aspartate(in) + sulfate(out) = D-aspartate(out) + sulfate(in). The catalysed reaction is L-aspartate(in) + sulfate(out) = L-aspartate(out) + sulfate(in). The enzyme catalyses sulfate(in) = sulfate(out). It carries out the reaction phosphate(in) = phosphate(out). It catalyses the reaction (S)-malate(out) = (S)-malate(in). Antiporter that transports inorganic anions (sulfate, sulfite, thiosulfate and phosphate) and, to a lesser extent, a variety of dicarboxylates (e.g. malonate, malate and citramalate) and, even more so, aspartate. The sulfate/sulfate exchange is much higher than the phosphate/phosphate and malate/malate exchanges. The transport affinities is higher for sulfate and thiosulfate than for any other substrate. May catalyze the export of sulfite and thiosulfate (the hydrogen sulfide degradation products) from the mitochondria, thereby modulating the level of the hydrogen sulfide. Also may mediate a very low unidirectional transport of sulfate, phosphate and (S)-malate. The polypeptide is Kidney mitochondrial carrier protein 1 (Mus musculus (Mouse)).